A 106-amino-acid chain; its full sequence is uncharacterized protein (106 aa).

The interval 1 to 46 (MPQGGTPCRRARRAVRPERPTSPEGVFCVGGGAPGGPPDTTNTVSA) is disordered.

This is an uncharacterized protein from Gracula (BFDV).